Here is a 1256-residue protein sequence, read N- to C-terminus: GPI inositol-deacylase (1256 aa).

Residues 37-48 (DVYANSTTNATA) show a composition bias toward polar residues. The segment at 37 to 203 (DVYANSTTNA…MEKEEEQKFV (167 aa)) is disordered. Residues asparagine 41 and asparagine 45 are each glycosylated (N-linked (GlcNAc...) asparagine). Over residues 59–68 (PRPSRPSQSS) the composition is skewed to low complexity. Positions 69–83 (AAERTSPESPSVRQS) are enriched in polar residues. The span at 107–135 (QSPSQQSQNQQQQQQQQQQQQQQQQQQQS) shows a compositional bias: low complexity. A compositionally biased stretch (polar residues) spans 143–156 (SGNFNWKLSHSRNG). Asparagine 155 carries N-linked (GlcNAc...) asparagine glycosylation. Positions 165-180 (FFSSSFSHSPSTPPLS) are enriched in low complexity. The span at 190–202 (HSKEMEKEEEQKF) shows a compositional bias: basic and acidic residues. Residues 214–234 (AITFVTLLISILGIGFLALVL) traverse the membrane as a helical segment. Asparagine 235 is a glycosylation site (N-linked (GlcNAc...) asparagine). Serine 397 is an active-site residue. A glycan (N-linked (GlcNAc...) asparagine) is linked at asparagine 582. The next 2 membrane-spanning stretches (helical) occupy residues 882–902 (LYMR…TLVL) and 929–949 (SIPL…NSSS). Asparagine 960 carries N-linked (GlcNAc...) asparagine glycosylation. 6 helical membrane passes run 980–1000 (PFFW…CTVF), 1005–1025 (LTLV…PGWI), 1053–1073 (ILLV…VCCL), 1103–1123 (SILL…VVWI), 1130–1150 (WLTP…IILV), and 1172–1192 (VLLF…AYML). N-linked (GlcNAc...) asparagine glycosylation is found at asparagine 1212, asparagine 1239, and asparagine 1242.

Belongs to the GPI inositol-deacylase family.

Its subcellular location is the endoplasmic reticulum membrane. Functionally, involved in inositol deacylation of GPI-anchored proteins which plays important roles in the quality control and ER-associated degradation of GPI-anchored proteins. The polypeptide is GPI inositol-deacylase (bst-1) (Neurospora crassa (strain ATCC 24698 / 74-OR23-1A / CBS 708.71 / DSM 1257 / FGSC 987)).